A 431-amino-acid chain; its full sequence is DNA polymerase delta subunit 2 (431 aa).

The protein belongs to the DNA polymerase delta/II small subunit family. Component of both the DNA polymerase delta and DNA polymerase zeta complexes. The DNA polymerase delta complex consisting of three subunits: the catalytic subunit PolD1 and two accessory subunits PolD2/Pol31 and PolD3/Pol32. Within the delta complex, interacts with both PolD1 and PolD3, and is able to interact with PolD1 in the absence of PolD3. Component of the DNA polymerase zeta complex consisting of four subunits: the catalytic subunit PolZ1 and three accessory subunits PolZ2/Rev7, PolD2/Pol31 and PolD3/Pol32. Expressed in ovaries and embryos (at the protein level).

It localises to the nucleus. It is found in the nucleoplasm. Functionally, accessory component of both the DNA polymerase delta complex and possibly the DNA polymerase zeta complex. As a component of the delta complex, participates in high fidelity genome replication, including lagging strand synthesis, DNA recombination and repair. Appears to promote the function of the DNA pol-delta complex accessory subunit PolD3 in both embryonic and postembryonic somatic cells. The sequence is that of DNA polymerase delta subunit 2 from Drosophila melanogaster (Fruit fly).